Here is a 130-residue protein sequence, read N- to C-terminus: Small ribosomal subunit protein uS8 (130 aa).

It belongs to the universal ribosomal protein uS8 family. As to quaternary structure, part of the 30S ribosomal subunit. Contacts proteins S5 and S12.

Its function is as follows. One of the primary rRNA binding proteins, it binds directly to 16S rRNA central domain where it helps coordinate assembly of the platform of the 30S subunit. This Shewanella sp. (strain MR-7) protein is Small ribosomal subunit protein uS8.